Consider the following 113-residue polypeptide: Large ribosomal subunit protein uL22 (113 aa).

This sequence belongs to the universal ribosomal protein uL22 family. Part of the 50S ribosomal subunit.

In terms of biological role, this protein binds specifically to 23S rRNA; its binding is stimulated by other ribosomal proteins, e.g. L4, L17, and L20. It is important during the early stages of 50S assembly. It makes multiple contacts with different domains of the 23S rRNA in the assembled 50S subunit and ribosome. The globular domain of the protein is located near the polypeptide exit tunnel on the outside of the subunit, while an extended beta-hairpin is found that lines the wall of the exit tunnel in the center of the 70S ribosome. This is Large ribosomal subunit protein uL22 from Roseiflexus sp. (strain RS-1).